A 567-amino-acid polypeptide reads, in one-letter code: Urease subunit alpha (567 aa).

Residues 129-567 (GGVDTHIHWI…LPMAQRYFLF (439 aa)) form the Urease domain. His-134, His-136, and Lys-217 together coordinate Ni(2+). Residue Lys-217 is modified to N6-carboxylysine. His-219 serves as a coordination point for substrate. Ni(2+) contacts are provided by His-246 and His-272. His-320 acts as the Proton donor in catalysis. Asp-360 contributes to the Ni(2+) binding site.

It belongs to the metallo-dependent hydrolases superfamily. Urease alpha subunit family. As to quaternary structure, heterotrimer of UreA (gamma), UreB (beta) and UreC (alpha) subunits. Three heterotrimers associate to form the active enzyme. Ni cation is required as a cofactor. Post-translationally, carboxylation allows a single lysine to coordinate two nickel ions.

The protein localises to the cytoplasm. The catalysed reaction is urea + 2 H2O + H(+) = hydrogencarbonate + 2 NH4(+). The protein operates within nitrogen metabolism; urea degradation; CO(2) and NH(3) from urea (urease route): step 1/1. The polypeptide is Urease subunit alpha (Citrobacter koseri (strain ATCC BAA-895 / CDC 4225-83 / SGSC4696)).